Here is a 488-residue protein sequence, read N- to C-terminus: Aspartyl/glutamyl-tRNA(Asn/Gln) amidotransferase subunit B (488 aa).

The protein belongs to the GatB/GatE family. GatB subfamily. As to quaternary structure, heterotrimer of A, B and C subunits.

The catalysed reaction is L-glutamyl-tRNA(Gln) + L-glutamine + ATP + H2O = L-glutaminyl-tRNA(Gln) + L-glutamate + ADP + phosphate + H(+). It carries out the reaction L-aspartyl-tRNA(Asn) + L-glutamine + ATP + H2O = L-asparaginyl-tRNA(Asn) + L-glutamate + ADP + phosphate + 2 H(+). Its function is as follows. Allows the formation of correctly charged Asn-tRNA(Asn) or Gln-tRNA(Gln) through the transamidation of misacylated Asp-tRNA(Asn) or Glu-tRNA(Gln) in organisms which lack either or both of asparaginyl-tRNA or glutaminyl-tRNA synthetases. The reaction takes place in the presence of glutamine and ATP through an activated phospho-Asp-tRNA(Asn) or phospho-Glu-tRNA(Gln). The polypeptide is Aspartyl/glutamyl-tRNA(Asn/Gln) amidotransferase subunit B (Ralstonia nicotianae (strain ATCC BAA-1114 / GMI1000) (Ralstonia solanacearum)).